The sequence spans 405 residues: Phosphoglycerate kinase (405 aa).

Substrate is bound by residues 24-26 (DFN), Arg40, 63-66 (HLGR), Arg122, and Arg162. Residues Lys212, Glu331, and 361–364 (GGDS) each bind ATP.

It belongs to the phosphoglycerate kinase family. In terms of assembly, monomer.

It is found in the cytoplasm. The catalysed reaction is (2R)-3-phosphoglycerate + ATP = (2R)-3-phospho-glyceroyl phosphate + ADP. It participates in carbohydrate degradation; glycolysis; pyruvate from D-glyceraldehyde 3-phosphate: step 2/5. In Corynebacterium glutamicum (strain R), this protein is Phosphoglycerate kinase.